Here is a 98-residue protein sequence, read N- to C-terminus: DNA-binding protein Fis (98 aa).

The segment at residues 74–93 (QTRAATMLGINRGTLRKKLK) is a DNA-binding region (H-T-H motif).

Belongs to the transcriptional regulatory Fis family. Homodimer.

Activates ribosomal RNA transcription. Plays a direct role in upstream activation of rRNA promoters. The polypeptide is DNA-binding protein Fis (Glaesserella parasuis serovar 5 (strain SH0165) (Haemophilus parasuis)).